We begin with the raw amino-acid sequence, 110 residues long: Flagellar hook-basal body complex protein FliE (110 aa).

It belongs to the FliE family.

Its subcellular location is the bacterial flagellum basal body. The polypeptide is Flagellar hook-basal body complex protein FliE (Pseudomonas putida (strain W619)).